The sequence spans 715 residues: ATP-dependent DNA helicase Hel308 (715 aa).

The Q motif signature appears at 1–29; the sequence is MKVGELNVSEKIKEILRERGIEELYPPQA. ATP contacts are provided by residues Q28 and 46–53; that span reads IPTASGKT. The Helicase ATP-binding domain maps to 33 to 197; it reads TSGVLEGENL…WLNAKLIRSD (165 aa). Residues 145–148 carry the DEAH box motif; the sequence is DEIH. Positions 226–422 constitute a Helicase C-terminal domain; the sequence is WEELVYDAVK…ILRSQILALI (197 aa).

The protein belongs to the helicase family. Hel308 subfamily. In terms of assembly, monomer.

The catalysed reaction is Couples ATP hydrolysis with the unwinding of duplex DNA by translocating in the 3'-5' direction.. It carries out the reaction ATP + H2O = ADP + phosphate + H(+). Functionally, DNA-dependent ATPase and 3'-5' DNA helicase that may be involved in repair of stalled replication forks. Rapidly unwinds double-stranded (ds)DNA with a 3'-overhang, has no strand reannealing capabilities. Binds single-stranded (ss)DNA, dsDNA with a 3'-overhang and ssRNA. This Pyrococcus abyssi (strain GE5 / Orsay) protein is ATP-dependent DNA helicase Hel308.